Consider the following 445-residue polypeptide: Deoxyribodipyrimidine photo-lyase (445 aa).

The 129-residue stretch at 20–148 (SYVVYWMQAS…QVESNVIVPV (129 aa)) folds into the Photolyase/cryptochrome alpha/beta domain. A DNA-binding site is contributed by Arg-239.

It belongs to the DNA photolyase class-2 family. FAD serves as cofactor. Requires coenzyme F420-(gamma-Glu)n as cofactor.

The enzyme catalyses cyclobutadipyrimidine (in DNA) = 2 pyrimidine residues (in DNA).. Involved in repair of UV radiation-induced DNA damage. Catalyzes the light-dependent monomerization (300-600 nm) of cyclobutyl pyrimidine dimers (in cis-syn configuration), which are formed between adjacent bases on the same DNA strand upon exposure to ultraviolet radiation. This Methanothermobacter thermautotrophicus (strain ATCC 29096 / DSM 1053 / JCM 10044 / NBRC 100330 / Delta H) (Methanobacterium thermoautotrophicum) protein is Deoxyribodipyrimidine photo-lyase (phr).